We begin with the raw amino-acid sequence, 192 residues long: Protein FAM210B, mitochondrial (192 aa).

The N-terminal 58 residues, 1-58, are a transit peptide targeting the mitochondrion; sequence MAGLLALLGPAGRVGARVRPRATWLLGATAPCAPPPLALALLPPRLDARLLRTARGDC. Positions 57-80 are disordered; that stretch reads DCRGHQDPSQATGTTGSSVSCTEE. Residues 63–77 show a composition bias toward polar residues; the sequence is DPSQATGTTGSSVSC. A DUF1279 domain is found at 80 to 191; it reads EKKQSKSQQL…VGFFKPPAAK (112 aa). 2 consecutive transmembrane segments (helical) span residues 99–119 and 150–170; these read VGVS…YMVV and FVVA…ITLV.

The protein belongs to the FAM210 family. Expressed in late erythroblast differentiation stages. Underexpressed in ovarian cancer epithelia cells compared with normal human ovarian surface epithelia.

It localises to the mitochondrion. Its subcellular location is the mitochondrion outer membrane. Plays a role in erythroid differentiation. Involved in cell proliferation and tumor cell growth suppression. Involved in the metabolic reprogramming of cancer cells in a PDK4-dependent manner. The polypeptide is Protein FAM210B, mitochondrial (Homo sapiens (Human)).